The sequence spans 228 residues: UPF0758 protein Reut_A2732 (228 aa).

In terms of domain architecture, MPN spans 102–224 (GLDSPAAVRS…VHSFAEHGEL (123 aa)). Zn(2+) is bound by residues His173, His175, and Asp186. A JAMM motif motif is present at residues 173–186 (HNHPSGCCTPSQSD).

This sequence belongs to the UPF0758 family.

The polypeptide is UPF0758 protein Reut_A2732 (Cupriavidus pinatubonensis (strain JMP 134 / LMG 1197) (Cupriavidus necator (strain JMP 134))).